A 591-amino-acid chain; its full sequence is Potassium-transporting ATPase potassium-binding subunit (591 aa).

The next 10 membrane-spanning stretches (helical) occupy residues 6–26, 63–83, 137–157, 179–199, 272–292, 303–323, 405–425, 444–464, 510–530, and 553–573; these read WFQI…LGVF, WTEY…MLYI, GLAY…IAFI, VLWV…SQGV, LSNL…TYTL, WAVW…VYWA, AGMY…GLMV, AMLV…ISSV, VAIG…MLAI, and LFSV…FFPA.

Belongs to the KdpA family. In terms of assembly, the system is composed of three essential subunits: KdpA, KdpB and KdpC.

The protein localises to the cell inner membrane. In terms of biological role, part of the high-affinity ATP-driven potassium transport (or Kdp) system, which catalyzes the hydrolysis of ATP coupled with the electrogenic transport of potassium into the cytoplasm. This subunit binds the periplasmic potassium ions and delivers the ions to the membrane domain of KdpB through an intramembrane tunnel. The protein is Potassium-transporting ATPase potassium-binding subunit of Koribacter versatilis (strain Ellin345).